The sequence spans 371 residues: Glycosyltransferase 8 domain-containing protein 1 (371 aa).

Residues 1 to 7 lie on the Cytoplasmic side of the membrane; it reads MSFRKVH. A helical; Signal-anchor for type II membrane protein membrane pass occupies residues 8 to 28; that stretch reads IAIILLAAVVFLLILHHNILG. Topologically, residues 29 to 371 are lumenal; it reads LTDILTRQSS…RRHGEADGTK (343 aa). Asn104, Asn249, and Asn257 each carry an N-linked (GlcNAc...) asparagine glycan.

This sequence belongs to the glycosyltransferase 8 family.

The protein resides in the membrane. This Xenopus tropicalis (Western clawed frog) protein is Glycosyltransferase 8 domain-containing protein 1 (glt8d1).